The chain runs to 470 residues: Uronate isomerase (470 aa).

Belongs to the metallo-dependent hydrolases superfamily. Uronate isomerase family.

The enzyme catalyses D-glucuronate = D-fructuronate. It catalyses the reaction aldehydo-D-galacturonate = keto-D-tagaturonate. The protein operates within carbohydrate metabolism; pentose and glucuronate interconversion. The protein is Uronate isomerase of Escherichia coli O17:K52:H18 (strain UMN026 / ExPEC).